Reading from the N-terminus, the 71-residue chain is uncharacterized protein (71 aa).

A helical membrane pass occupies residues 12–34; that stretch reads GYLSLTLVTLPVCSSLHCYFLWT.

It is found in the membrane. This is an uncharacterized protein from Dictyostelium discoideum (Social amoeba).